A 251-amino-acid polypeptide reads, in one-letter code: MIVKTDEELQALKEIGYICAKVRDTMKEATKPGVTTRELDHIAKDLFEEHGAISAPIHDENFPGQTCISVNEEVAHGIPGKRVIHEGDLVNIDVSALKNGYYADTGISFVVGKSDQPLKQKVCDVATMAFENAMKKVKPGTKLSNIGKAVHATARQNDLTVIKNLTGHGVGQSLHEAPNHVMNYFDPKDKTLLKEGQVIAVEPFISTHATFVTEGKNEWAFETKDKSYVAQIEHTVIVTKDGPLLTTKIDD.

Substrate is bound at residue H76. D93, D104, and H168 together coordinate a divalent metal cation. H175 is a binding site for substrate. Residues E202 and E233 each coordinate a divalent metal cation.

Belongs to the peptidase M24A family. Methionine aminopeptidase type 1 subfamily. Monomer. Co(2+) serves as cofactor. Zn(2+) is required as a cofactor. It depends on Mn(2+) as a cofactor. Requires Fe(2+) as cofactor.

It catalyses the reaction Release of N-terminal amino acids, preferentially methionine, from peptides and arylamides.. Its function is as follows. Removes the N-terminal methionine from nascent proteins. The N-terminal methionine is often cleaved when the second residue in the primary sequence is small and uncharged (Met-Ala-, Cys, Gly, Pro, Ser, Thr, or Val). Requires deformylation of the N(alpha)-formylated initiator methionine before it can be hydrolyzed. In Staphylococcus epidermidis (strain ATCC 35984 / DSM 28319 / BCRC 17069 / CCUG 31568 / BM 3577 / RP62A), this protein is Methionine aminopeptidase.